The sequence spans 123 residues: Holo-[acyl-carrier-protein] synthase (123 aa).

Mg(2+)-binding residues include Asp9 and Glu57.

Belongs to the P-Pant transferase superfamily. AcpS family. It depends on Mg(2+) as a cofactor.

The protein localises to the cytoplasm. The enzyme catalyses apo-[ACP] + CoA = holo-[ACP] + adenosine 3',5'-bisphosphate + H(+). In terms of biological role, transfers the 4'-phosphopantetheine moiety from coenzyme A to a Ser of acyl-carrier-protein. The sequence is that of Holo-[acyl-carrier-protein] synthase from Streptomyces coelicolor (strain ATCC BAA-471 / A3(2) / M145).